A 91-amino-acid polypeptide reads, in one-letter code: Protein LURE 1.6 (91 aa).

The N-terminal stretch at 1–20 is a signal peptide; that stretch reads MKLPFIFLITLLIFVSSCTS. Cystine bridges form between Cys-59/Cys-76, Cys-62/Cys-83, and Cys-66/Cys-85.

It belongs to the DEFL family. As to expression, expressed in the pistil. Detected in the synergid cells.

The protein resides in the secreted. Functionally, pollen tube attractants guiding pollen tubes to the ovular micropyle. This Arabidopsis thaliana (Mouse-ear cress) protein is Protein LURE 1.6.